Consider the following 453-residue polypeptide: Serine incorporator 1 (453 aa).

Gly-2 carries N-myristoyl glycine lipidation. The Cytoplasmic portion of the chain corresponds to Gly-2–Arg-39. The chain crosses the membrane as a helical span at residues Leu-40–Gly-60. Residues Met-61–Lys-88 are Lumenal-facing. Residues Ala-89–Ile-109 traverse the membrane as a helical segment. The Cytoplasmic portion of the chain corresponds to Lys-110–Asn-123. The chain crosses the membrane as a helical span at residues Gly-124–Pro-144. The Lumenal segment spans residues Glu-145–Val-151. Residues Trp-152–Ile-172 traverse the membrane as a helical segment. Topologically, residues Asp-173–Ala-197 are cytoplasmic. A helical transmembrane segment spans residues Leu-198–Val-218. Residues Tyr-219 to Ala-231 are Lumenal-facing. The helical transmembrane segment at Phe-232–Ile-252 threads the bilayer. Residues Gln-253–Ser-259 are Cytoplasmic-facing. Residues Gly-260 to Thr-280 traverse the membrane as a helical segment. Topologically, residues Asn-281–Ser-309 are lumenal. The chain crosses the membrane as a helical span at residues Val-310–Tyr-330. Over Ser-331–Ser-387 the chain is Cytoplasmic. Position 351 is a phosphoserine (Ser-351). Thr-352 is modified (phosphothreonine). Ser-364 carries the post-translational modification Phosphoserine. A helical transmembrane segment spans residues Phe-388–Tyr-408. Residues Arg-409–Lys-426 lie on the Lumenal side of the membrane. Residues Ile-427–Leu-447 form a helical membrane-spanning segment. Topologically, residues Thr-448 to Asp-453 are cytoplasmic.

Belongs to the TDE1 family. As to quaternary structure, interacts with SPTLC1.

The protein resides in the endoplasmic reticulum membrane. In terms of biological role, enhances the incorporation of serine into phosphatidylserine and sphingolipids. The protein is Serine incorporator 1 (SERINC1) of Bos taurus (Bovine).